An 894-amino-acid polypeptide reads, in one-letter code: Phosphoenolpyruvate carboxylase (894 aa).

Active-site residues include H143 and K556.

Belongs to the PEPCase type 1 family. Mg(2+) is required as a cofactor.

The enzyme catalyses oxaloacetate + phosphate = phosphoenolpyruvate + hydrogencarbonate. Its function is as follows. Forms oxaloacetate, a four-carbon dicarboxylic acid source for the tricarboxylic acid cycle. This chain is Phosphoenolpyruvate carboxylase, found in Acinetobacter baumannii (strain ATCC 17978 / DSM 105126 / CIP 53.77 / LMG 1025 / NCDC KC755 / 5377).